The chain runs to 604 residues: Integrin alpha-IIb (604 aa).

The stretch at 1–61 (QVLDSPFPTG…ASVQLLVQDS (61 aa)) is one FG-GAP repeat. At 1 to 558 (QVLDSPFPTG…TQLLRALEER (558 aa)) the chain is on the extracellular side. D22, D24, N26, Y28, and D30 together coordinate Ca(2+). 2 cysteine pairs are disulfide-bonded: C69–C80 and C86–C141. N166 carries N-linked (GlcNAc...) asparagine glycosylation. 4 disulfides stabilise this stretch: C198–C204, C270–C283, C422–C486, and C476–C481. The N-linked (GlcNAc...) asparagine glycan is linked to N276. The N-linked (GlcNAc...) asparagine glycan is linked to N527. Residues 559 to 584 (AIPIWWVLVGVLGGLLLLTILVLAMW) form a helical membrane-spanning segment. Over 585 to 604 (KVGFFKRNRPPLEEDDEEGE) the chain is Cytoplasmic. The short motif at 587 to 591 (GFFKR) is the GFFKR motif element.

This sequence belongs to the integrin alpha chain family. Heterodimer of an alpha and a beta subunit. The alpha subunit is composed of a heavy and a light chain linked by a disulfide bond. Alpha-IIb associates with beta-3. Directly interacts with RNF181. Interacts (via C-terminus cytoplasmic tail region) with CIB1; the interaction is direct and calcium-dependent. Interacts (via C-terminus cytoplasmic tail region) with CIB2, CIB3 and CIB4; the interactions are stabilized/increased in a calcium and magnesium-dependent manner. ITGA2B:ITGB3 interacts with PPIA/CYPA; the interaction is ROS and PPIase activity-dependent and is increased in the presence of thrombin. ITGA2B:ITGB3 interacts with SELP (via C-type lectin domain); the interaction mediates cell-cell interaction and adhesion.

The protein resides in the membrane. Its function is as follows. Integrin alpha-IIb/beta-3 is a receptor for fibronectin, fibrinogen, plasminogen, prothrombin, thrombospondin and vitronectin. It recognizes the sequence R-G-D in a wide array of ligands. It recognizes the sequence H-H-L-G-G-G-A-K-Q-A-G-D-V in fibrinogen gamma chain. Following activation integrin alpha-IIb/beta-3 brings about platelet/platelet interaction through binding of soluble fibrinogen. This step leads to rapid platelet aggregation which physically plugs ruptured endothelial cell surface. The protein is Integrin alpha-IIb (ITGA2B) of Papio cynocephalus (Yellow baboon).